Reading from the N-terminus, the 198-residue chain is Recombination protein RecR (198 aa).

The C4-type zinc-finger motif lies at 56–71 (CDTCGNVDTQNPCGIC). The 96-residue stretch at 79–174 (KSICVVEDVA…RITQLAHGLP (96 aa)) folds into the Toprim domain.

It belongs to the RecR family.

In terms of biological role, may play a role in DNA repair. It seems to be involved in an RecBC-independent recombinational process of DNA repair. It may act with RecF and RecO. This Erythrobacter litoralis (strain HTCC2594) protein is Recombination protein RecR.